We begin with the raw amino-acid sequence, 402 residues long: MDNYDESRVFFREMCKNNGVDFPYRRGVIMSELHTPCCPVVCKLILPDPLTIDYISKIQQKPFLCIQFCSVLPCLPILEEFEHRSKNETLSRHFVDYEGAITLLTFDELFNKYSKIEDNHFVFHMDSNKYLLNEHTSKKIIDLINPSMAFIPTLSLKHSERKKWSTRKRTRFNDLYQSYYETLLKCSNKTKLVKPIHPCIEHKDMGDFEAIEFPGFGFGESLNERYELIKEMGANLIGKELRIIQLKTGTPLEILHAVLLGFDVVISPYPEILSLQGCALSFELPSEIEDNCEPEYVLNLLNEKCKFIDGVYKDQINDIVDLKNSVYISDVETPMDEKSIMKESRAYVNHLLNCKEMDGNIILSAHNLYMYEMLFQRIRDSIENNTLVSFVHNFVKCNLKED.

It belongs to the queuine tRNA-ribosyltransferase family.

This chain is Queuine tRNA-ribosyltransferase-like protein, found in Theileria annulata.